The chain runs to 457 residues: Bifunctional protein GlmU (457 aa).

The pyrophosphorylase stretch occupies residues 1 to 236 (MDQDACTHSA…DWHFLGVNTP (236 aa)). Residues 14 to 17 (LAAG), K28, Q79, and 84 to 85 (GT) each bind UDP-N-acetyl-alpha-D-glucosamine. D110 is a binding site for Mg(2+). 4 residues coordinate UDP-N-acetyl-alpha-D-glucosamine: G145, E159, N176, and N234. N234 contributes to the Mg(2+) binding site. The linker stretch occupies residues 237 to 257 (KDLSYVESIQQAFIIEKLLQS). The N-acetyltransferase stretch occupies residues 258-457 (GVIIHSPESV…GKQKNFSKRK (200 aa)). UDP-N-acetyl-alpha-D-glucosamine-binding residues include R340 and K358. Catalysis depends on H370, which acts as the Proton acceptor. UDP-N-acetyl-alpha-D-glucosamine-binding residues include Y373 and N384. Acetyl-CoA contacts are provided by residues A387, 393-394 (NY), S412, A430, and R447.

This sequence in the N-terminal section; belongs to the N-acetylglucosamine-1-phosphate uridyltransferase family. It in the C-terminal section; belongs to the transferase hexapeptide repeat family. As to quaternary structure, homotrimer. Requires Mg(2+) as cofactor.

It localises to the cytoplasm. The catalysed reaction is alpha-D-glucosamine 1-phosphate + acetyl-CoA = N-acetyl-alpha-D-glucosamine 1-phosphate + CoA + H(+). It catalyses the reaction N-acetyl-alpha-D-glucosamine 1-phosphate + UTP + H(+) = UDP-N-acetyl-alpha-D-glucosamine + diphosphate. Its pathway is nucleotide-sugar biosynthesis; UDP-N-acetyl-alpha-D-glucosamine biosynthesis; N-acetyl-alpha-D-glucosamine 1-phosphate from alpha-D-glucosamine 6-phosphate (route II): step 2/2. It participates in nucleotide-sugar biosynthesis; UDP-N-acetyl-alpha-D-glucosamine biosynthesis; UDP-N-acetyl-alpha-D-glucosamine from N-acetyl-alpha-D-glucosamine 1-phosphate: step 1/1. The protein operates within bacterial outer membrane biogenesis; LPS lipid A biosynthesis. Its function is as follows. Catalyzes the last two sequential reactions in the de novo biosynthetic pathway for UDP-N-acetylglucosamine (UDP-GlcNAc). The C-terminal domain catalyzes the transfer of acetyl group from acetyl coenzyme A to glucosamine-1-phosphate (GlcN-1-P) to produce N-acetylglucosamine-1-phosphate (GlcNAc-1-P), which is converted into UDP-GlcNAc by the transfer of uridine 5-monophosphate (from uridine 5-triphosphate), a reaction catalyzed by the N-terminal domain. This Lawsonia intracellularis (strain PHE/MN1-00) protein is Bifunctional protein GlmU.